Consider the following 148-residue polypeptide: Protein ADM2 (148 aa).

The first 24 residues, 1-24 (MARIPTAALGCISLLCLQLPGSLS), serve as a signal peptide directing secretion. A propeptide spanning residues 25–98 (RSLGGDPRPV…HSGPRRHSGP (74 aa)) is cleaved from the precursor. 2 disordered regions span residues 26 to 57 (SLGG…APRP) and 70 to 101 (RGAG…PRRT). An intrachain disulfide couples Cys110 to Cys115. Tyr147 carries the post-translational modification Tyrosine amide.

It belongs to the adrenomedullin family. In terms of tissue distribution, expressed in the esophagus, stomach, jejunum, ileum, ileocecum, ascending colon, transverse colon, descending colon and rectum. Expressed in myocardial cells of the heart, renal tubular cells, hypothalamus, and pituitary.

It localises to the secreted. In terms of biological role, intermedin/ADM2 is a peptide hormone that plays a role as physiological regulator of gastrointestinal and cardiovascular bioactivities mediated by the CALCRL-RAMPs receptor complexes. Activates the cAMP-dependent pathway through interaction with CALCRL-RAMP3 receptor complex. The protein is Protein ADM2 of Homo sapiens (Human).